A 332-amino-acid chain; its full sequence is Glycerol-3-phosphate dehydrogenase [NAD(P)+] (332 aa).

S11, W12, R32, R33, and K106 together coordinate NADPH. Sn-glycerol 3-phosphate contacts are provided by K106 and G136. A140 serves as a coordination point for NADPH. The sn-glycerol 3-phosphate site is built by K191, D244, S254, R255, and N256. Catalysis depends on K191, which acts as the Proton acceptor. R255 lines the NADPH pocket. Positions 280 and 282 each coordinate NADPH.

This sequence belongs to the NAD-dependent glycerol-3-phosphate dehydrogenase family.

The protein resides in the cytoplasm. It catalyses the reaction sn-glycerol 3-phosphate + NAD(+) = dihydroxyacetone phosphate + NADH + H(+). The catalysed reaction is sn-glycerol 3-phosphate + NADP(+) = dihydroxyacetone phosphate + NADPH + H(+). It participates in membrane lipid metabolism; glycerophospholipid metabolism. Catalyzes the reduction of the glycolytic intermediate dihydroxyacetone phosphate (DHAP) to sn-glycerol 3-phosphate (G3P), the key precursor for phospholipid synthesis. The protein is Glycerol-3-phosphate dehydrogenase [NAD(P)+] of Corynebacterium kroppenstedtii (strain DSM 44385 / JCM 11950 / CIP 105744 / CCUG 35717).